The chain runs to 273 residues: ATP synthase subunit a (273 aa).

A run of 7 helical transmembrane segments spans residues 41–61, 101–121, 122–142, 143–163, 183–203, 221–241, and 247–267; these read ILNI…LLIF, LIAP…LMDL, LAVD…ALRV, VPSA…ILII, PFNH…SLLS, LVFI…ISVP, and IIVI…YIAM.

It belongs to the ATPase A chain family. In terms of assembly, F-type ATPases have 2 components, CF(1) - the catalytic core - and CF(0) - the membrane proton channel. CF(1) has five subunits: alpha(3), beta(3), gamma(1), delta(1), epsilon(1). CF(0) has three main subunits: a(1), b(2) and c(9-12). The alpha and beta chains form an alternating ring which encloses part of the gamma chain. CF(1) is attached to CF(0) by a central stalk formed by the gamma and epsilon chains, while a peripheral stalk is formed by the delta and b chains.

The protein localises to the cell membrane. Its function is as follows. Key component of the proton channel; it plays a direct role in the translocation of protons across the membrane. The polypeptide is ATP synthase subunit a (Baumannia cicadellinicola subsp. Homalodisca coagulata).